The chain runs to 602 residues: uncharacterized protein (602 aa).

N-linked (GlcNAc...) asparagine glycosylation is found at Asn305, Asn497, and Asn577.

N-glycosylated.

Its subcellular location is the vacuole. This is an uncharacterized protein from Saccharomyces cerevisiae (strain ATCC 204508 / S288c) (Baker's yeast).